The sequence spans 35 residues: Photosystem II reaction center protein T (35 aa).

Residues 3 to 23 traverse the membrane as a helical segment; sequence ALVYTFLLVGTLGIIFFAIFF.

Belongs to the PsbT family. As to quaternary structure, PSII is composed of 1 copy each of membrane proteins PsbA, PsbB, PsbC, PsbD, PsbE, PsbF, PsbH, PsbI, PsbJ, PsbK, PsbL, PsbM, PsbT, PsbY, PsbZ, Psb30/Ycf12, at least 3 peripheral proteins of the oxygen-evolving complex and a large number of cofactors. It forms dimeric complexes.

Its subcellular location is the plastid. The protein resides in the chloroplast thylakoid membrane. Its function is as follows. Found at the monomer-monomer interface of the photosystem II (PS II) dimer, plays a role in assembly and dimerization of PSII. PSII is a light-driven water plastoquinone oxidoreductase, using light energy to abstract electrons from H(2)O, generating a proton gradient subsequently used for ATP formation. The sequence is that of Photosystem II reaction center protein T from Chara vulgaris (Common stonewort).